The chain runs to 117 residues: Large ribosomal subunit protein bL19 (117 aa).

Belongs to the bacterial ribosomal protein bL19 family.

Functionally, this protein is located at the 30S-50S ribosomal subunit interface and may play a role in the structure and function of the aminoacyl-tRNA binding site. The polypeptide is Large ribosomal subunit protein bL19 (Alkalilimnicola ehrlichii (strain ATCC BAA-1101 / DSM 17681 / MLHE-1)).